The sequence spans 130 residues: Small ribosomal subunit protein uS8 (130 aa).

The protein belongs to the universal ribosomal protein uS8 family. Part of the 30S ribosomal subunit. Contacts proteins S5 and S12.

In terms of biological role, one of the primary rRNA binding proteins, it binds directly to 16S rRNA central domain where it helps coordinate assembly of the platform of the 30S subunit. The protein is Small ribosomal subunit protein uS8 of Phytoplasma australiense.